The chain runs to 532 residues: Putative sodium-dependent excitatory amino acid transporter glt-3 (532 aa).

Topologically, residues 1 to 5 (MGMKK) are cytoplasmic. 3 helical membrane passes run 6 to 26 (DLLL…GFVI), 46 to 66 (FMQI…ISAL), and 83 to 103 (IYYM…VSSI). Topologically, residues 104-181 (HPGDPELIHE…SEVLHKQTLT (78 aa)) are extracellular. 2 N-linked (GlcNAc...) asparagine glycosylation sites follow: N164 and N169. 5 consecutive transmembrane segments (helical) span residues 182–202 (YTNE…GIIL), 222–242 (IIMR…LSLV), 264–284 (VTVI…LYFL), 352–372 (AVAV…MDLV), and 383–402 (IGSG…LTTV).

This sequence belongs to the dicarboxylate/amino acid:cation symporter (DAACS) (TC 2.A.23) family.

It is found in the membrane. The polypeptide is Putative sodium-dependent excitatory amino acid transporter glt-3 (glt-3) (Caenorhabditis elegans).